Consider the following 333-residue polypeptide: Holliday junction branch migration complex subunit RuvB (333 aa).

The large ATPase domain (RuvB-L) stretch occupies residues 1–182 (MDERLLSQSH…FGVTLKLEYY (182 aa)). Residues L21, R22, G63, K66, T67, T68, 129 to 131 (EDY), R172, Y182, and R219 each bind ATP. Mg(2+) is bound at residue T67. The tract at residues 183–253 (ETHELAAIVS…LASDALDRLH (71 aa)) is small ATPAse domain (RuvB-S). A head domain (RuvB-H) region spans residues 256–333 (ALGLDEVDHR…SHFGYEEEEE (78 aa)). Positions 311 and 316 each coordinate DNA.

The protein belongs to the RuvB family. Homohexamer. Forms an RuvA(8)-RuvB(12)-Holliday junction (HJ) complex. HJ DNA is sandwiched between 2 RuvA tetramers; dsDNA enters through RuvA and exits via RuvB. An RuvB hexamer assembles on each DNA strand where it exits the tetramer. Each RuvB hexamer is contacted by two RuvA subunits (via domain III) on 2 adjacent RuvB subunits; this complex drives branch migration. In the full resolvosome a probable DNA-RuvA(4)-RuvB(12)-RuvC(2) complex forms which resolves the HJ.

The protein localises to the cytoplasm. It carries out the reaction ATP + H2O = ADP + phosphate + H(+). The RuvA-RuvB-RuvC complex processes Holliday junction (HJ) DNA during genetic recombination and DNA repair, while the RuvA-RuvB complex plays an important role in the rescue of blocked DNA replication forks via replication fork reversal (RFR). RuvA specifically binds to HJ cruciform DNA, conferring on it an open structure. The RuvB hexamer acts as an ATP-dependent pump, pulling dsDNA into and through the RuvAB complex. RuvB forms 2 homohexamers on either side of HJ DNA bound by 1 or 2 RuvA tetramers; 4 subunits per hexamer contact DNA at a time. Coordinated motions by a converter formed by DNA-disengaged RuvB subunits stimulates ATP hydrolysis and nucleotide exchange. Immobilization of the converter enables RuvB to convert the ATP-contained energy into a lever motion, pulling 2 nucleotides of DNA out of the RuvA tetramer per ATP hydrolyzed, thus driving DNA branch migration. The RuvB motors rotate together with the DNA substrate, which together with the progressing nucleotide cycle form the mechanistic basis for DNA recombination by continuous HJ branch migration. Branch migration allows RuvC to scan DNA until it finds its consensus sequence, where it cleaves and resolves cruciform DNA. This is Holliday junction branch migration complex subunit RuvB from Exiguobacterium sp. (strain ATCC BAA-1283 / AT1b).